The sequence spans 261 residues: MAVISMKQLLEAGVHFGHQTRRWNPKMKKYIFTERNGIYIIDLQKTVKLVDAAYDYMKNVAEEGGVALFVGTKKQAQEAIKDEAIRAGQYYVNHRWLGGTLTNWDTIQKRIARLKKINAMEEDGTFEVLPKKEVAGLNKERERLEKFLGGIADMPRIPDVMYIVDPRKERIAVQEAHKLNIPIVAMVDTNCDPDEIDVVIPSNDDAIRAVKLITAKMADAFIEGNQGEDQATEELFVEETPEATSIEEIVDVVEGNNESAE.

The protein belongs to the universal ribosomal protein uS2 family.

The chain is Small ribosomal subunit protein uS2 from Enterococcus faecalis (strain ATCC 700802 / V583).